Consider the following 268-residue polypeptide: MSLSFLLLLFFSHLILSAWAHGEKRLAPKGQPGPAATDRNPRGSSSRQSSSSAMSSSSASSSPAASLGSQGSGLEQSSFQWSPSGRRTGSLYCRVGIGFHLQIYPDGKVNGSHEANMLSVLEIFAVSQGIVGIRGVFSNKFLAMSKKGKLHASAKFTDDCKFRERFQENSYNTYASAIHRTEKTGREWYVALNKRGKAKRGCSPRVKPQHISTHFLPRFKQSEQPELSFTVTVPEKKKPPSPIKPKIPLSAPRKNTNSVKYRLKFRFG.

An N-terminal signal peptide occupies residues 1-20 (MSLSFLLLLFFSHLILSAWA). A disordered region spans residues 26–81 (LAPKGQPGPAATDRNPRGSSSRQSSSSAMSSSSASSSPAASLGSQGSGLEQSSFQW). Over residues 43 to 80 (GSSSRQSSSSAMSSSSASSSPAASLGSQGSGLEQSSFQ) the composition is skewed to low complexity. N110 is a glycosylation site (N-linked (GlcNAc...) asparagine). The tract at residues 233-255 (VPEKKKPPSPIKPKIPLSAPRKN) is disordered.

It belongs to the heparin-binding growth factors family. Interacts with FGFR1 and FGFR2. Affinity between fibroblast growth factors (FGFs) and their receptors is increased by heparan sulfate glycosaminoglycans that function as coreceptors. In terms of tissue distribution, expressed in neonatal brain.

The protein localises to the secreted. Functionally, plays an important role in the regulation of cell proliferation and cell differentiation. Required for normal regulation of the hair growth cycle. Functions as an inhibitor of hair elongation by promoting progression from anagen, the growth phase of the hair follicle, into catagen the apoptosis-induced regression phase. The chain is Fibroblast growth factor 5 (FGF5) from Homo sapiens (Human).